The following is a 423-amino-acid chain: Glutamyl-tRNA reductase (423 aa).

Residues Thr49 to Arg52, Ser111, Glu116 to Gln118, and Gln122 contribute to the substrate site. Cys50 (nucleophile) is an active-site residue. Gly191–Ser196 contacts NADP(+).

The protein belongs to the glutamyl-tRNA reductase family. As to quaternary structure, homodimer.

It carries out the reaction (S)-4-amino-5-oxopentanoate + tRNA(Glu) + NADP(+) = L-glutamyl-tRNA(Glu) + NADPH + H(+). The protein operates within porphyrin-containing compound metabolism; protoporphyrin-IX biosynthesis; 5-aminolevulinate from L-glutamyl-tRNA(Glu): step 1/2. In terms of biological role, catalyzes the NADPH-dependent reduction of glutamyl-tRNA(Glu) to glutamate 1-semialdehyde (GSA). The sequence is that of Glutamyl-tRNA reductase from Syntrophus aciditrophicus (strain SB).